A 351-amino-acid polypeptide reads, in one-letter code: Biotin synthase (351 aa).

One can recognise a Radical SAM core domain in the interval 49–265 (NRVRIHILDN…LSVFRLVNPD (217 aa)). 3 residues coordinate [4Fe-4S] cluster: Cys64, Cys68, and Cys71. Cys108, Cys140, Cys200, and Arg269 together coordinate [2Fe-2S] cluster.

This sequence belongs to the radical SAM superfamily. Biotin synthase family. As to quaternary structure, homodimer. It depends on [4Fe-4S] cluster as a cofactor. [2Fe-2S] cluster serves as cofactor.

It catalyses the reaction (4R,5S)-dethiobiotin + (sulfur carrier)-SH + 2 reduced [2Fe-2S]-[ferredoxin] + 2 S-adenosyl-L-methionine = (sulfur carrier)-H + biotin + 2 5'-deoxyadenosine + 2 L-methionine + 2 oxidized [2Fe-2S]-[ferredoxin]. It functions in the pathway cofactor biosynthesis; biotin biosynthesis; biotin from 7,8-diaminononanoate: step 2/2. Its function is as follows. Catalyzes the conversion of dethiobiotin (DTB) to biotin by the insertion of a sulfur atom into dethiobiotin via a radical-based mechanism. The protein is Biotin synthase of Leptospira biflexa serovar Patoc (strain Patoc 1 / Ames).